The sequence spans 200 residues: Nucleoside triphosphate pyrophosphatase (200 aa).

Asp79 acts as the Proton acceptor in catalysis.

The protein belongs to the Maf family. The cofactor is a divalent metal cation.

Its subcellular location is the cytoplasm. It catalyses the reaction a ribonucleoside 5'-triphosphate + H2O = a ribonucleoside 5'-phosphate + diphosphate + H(+). It carries out the reaction a 2'-deoxyribonucleoside 5'-triphosphate + H2O = a 2'-deoxyribonucleoside 5'-phosphate + diphosphate + H(+). Functionally, nucleoside triphosphate pyrophosphatase. May have a dual role in cell division arrest and in preventing the incorporation of modified nucleotides into cellular nucleic acids. The chain is Nucleoside triphosphate pyrophosphatase from Legionella pneumophila (strain Lens).